We begin with the raw amino-acid sequence, 122 residues long: MAKPSKKNRTHEKRKVRVRKKLFGTQDRPRLSVFRSAKHIYAQVIIDETGQTIAGASTLDKEAKDKGGFESKVEAAKFVGKLVAQRAKEKGVTKVVFDRNGFLYHGRVKAVSTGARDGGLEF.

This sequence belongs to the universal ribosomal protein uL18 family. Part of the 50S ribosomal subunit; part of the 5S rRNA/L5/L18/L25 subcomplex. Contacts the 5S and 23S rRNAs.

In terms of biological role, this is one of the proteins that bind and probably mediate the attachment of the 5S RNA into the large ribosomal subunit, where it forms part of the central protuberance. The polypeptide is Large ribosomal subunit protein uL18 (Desulfatibacillum aliphaticivorans).